The primary structure comprises 810 residues: Plasminogen (810 aa).

Positions M1 to G19 are cleaved as a signal peptide. Positions E20–V98 constitute a PAN domain. 12 cysteine pairs are disulfide-bonded: C49–C73, C53–C61, C103–C181, C124–C164, C152–C176, C185–C262, C188–C316, C206–C245, C234–C257, C275–C352, C296–C335, and C324–C347. 3 Kringle domains span residues C103–C181, E184–C262, and C275–C352. The span at Q125–T141 shows a compositional bias: polar residues. The tract at residues Q125–E145 is disordered. The L-lysine site is built by T136, D158, and R172. Residue T365 is glycosylated (O-linked (GalNAc...) threonine). Cystine bridges form between C377/C454, C398/C437, C426/C449, C481/C560, C502/C543, C531/C555, C567/C685, C577/C585, and C607/C623. Kringle domains are found at residues C377–C454 and C481–C560. D432 and R445 together coordinate L-lysine. In terms of domain architecture, Peptidase S1 spans V581–R808. Phosphoserine is present on S597. Active-site charge relay system residues include H622 and D665. Residue S688 is modified to Phosphoserine. 3 cysteine pairs are disulfide-bonded: C699/C766, C729/C745, and C756/C784. The active-site Charge relay system is S760.

The protein belongs to the peptidase S1 family. Plasminogen subfamily. In terms of assembly, interacts with CSPG4 and AMOT. Interacts (via the Kringle domains) with HRG; the interaction tethers PLG to the cell surface and enhances its activation. Interacts (via Kringle 4 domain) with ADA; the interaction stimulates PLG activation when in complex with DPP4. Angiostatin: Interacts with ATP5F1A; the interaction inhibits most of the angiogenic effects of angiostatin. In terms of processing, in the presence of the inhibitor, the activation involves only cleavage after Arg-580, yielding two chains held together by two disulfide bonds. In the absence of the inhibitor, the activation involves additionally the removal of the activation peptide.

The protein localises to the secreted. The enzyme catalyses Preferential cleavage: Lys-|-Xaa &gt; Arg-|-Xaa, higher selectivity than trypsin. Converts fibrin into soluble products.. Its activity is regulated as follows. Converted into plasmin by plasminogen activators, both plasminogen and its activator being bound to fibrin. Activated with catalytic amounts of streptokinase. Functionally, plasmin dissolves the fibrin of blood clots and acts as a proteolytic factor in a variety of other processes including embryonic development, tissue remodeling, tumor invasion, and inflammation. In ovulation, weakens the walls of the Graafian follicle. It activates the urokinase-type plasminogen activator, collagenases and several complement zymogens, such as C1, C4 and C5. Cleavage of fibronectin and laminin leads to cell detachment and apoptosis. Also cleaves fibrin, thrombospondin and von Willebrand factor. Its role in tissue remodeling and tumor invasion may be modulated by CSPG4. Binds to cells. The chain is Plasminogen (PLG) from Macaca mulatta (Rhesus macaque).